Here is a 253-residue protein sequence, read N- to C-terminus: Imidazole glycerol phosphate synthase subunit HisF (253 aa).

Catalysis depends on residues aspartate 11 and aspartate 130.

It belongs to the HisA/HisF family. In terms of assembly, heterodimer of HisH and HisF.

It is found in the cytoplasm. The catalysed reaction is 5-[(5-phospho-1-deoxy-D-ribulos-1-ylimino)methylamino]-1-(5-phospho-beta-D-ribosyl)imidazole-4-carboxamide + L-glutamine = D-erythro-1-(imidazol-4-yl)glycerol 3-phosphate + 5-amino-1-(5-phospho-beta-D-ribosyl)imidazole-4-carboxamide + L-glutamate + H(+). It participates in amino-acid biosynthesis; L-histidine biosynthesis; L-histidine from 5-phospho-alpha-D-ribose 1-diphosphate: step 5/9. Functionally, IGPS catalyzes the conversion of PRFAR and glutamine to IGP, AICAR and glutamate. The HisF subunit catalyzes the cyclization activity that produces IGP and AICAR from PRFAR using the ammonia provided by the HisH subunit. The sequence is that of Imidazole glycerol phosphate synthase subunit HisF from Clostridium beijerinckii (strain ATCC 51743 / NCIMB 8052) (Clostridium acetobutylicum).